The primary structure comprises 250 residues: tRNA-specific adenosine deaminase subunit TAD2 (250 aa).

Residues 1 to 119 (MQHIKHMRTA…ERFGGNGTVL (119 aa)) enclose the CMP/dCMP-type deaminase domain. H54 lines the Zn(2+) pocket. Catalysis depends on E56, which acts as the Proton donor. Residues C88 and C91 each contribute to the Zn(2+) site.

This sequence belongs to the cytidine and deoxycytidylate deaminase family. ADAT2 subfamily. Heterodimer with TAD3. Zn(2+) is required as a cofactor.

The protein resides in the cytoplasm. It is found in the nucleus. It carries out the reaction adenosine(34) in tRNA + H2O + H(+) = inosine(34) in tRNA + NH4(+). Functionally, structural subunit of tRNA-specific adenosine deaminase, which deaminates adenosine-34 (the first, also called wobble position of the anticodon) to inosine in many tRNAs. Inosine-34 allows the decoding of 3 different nucleotides at the third position of mRNA codons, as inosine is able to pair with U, C, and A. In Saccharomyces cerevisiae (strain ATCC 204508 / S288c) (Baker's yeast), this protein is tRNA-specific adenosine deaminase subunit TAD2 (TAD2).